Here is a 193-residue protein sequence, read N- to C-terminus: Acyl carrier protein phosphodiesterase (193 aa).

The protein belongs to the AcpH family.

It carries out the reaction holo-[ACP] + H2O = apo-[ACP] + (R)-4'-phosphopantetheine + H(+). Its function is as follows. Converts holo-ACP to apo-ACP by hydrolytic cleavage of the phosphopantetheine prosthetic group from ACP. The sequence is that of Acyl carrier protein phosphodiesterase from Pectobacterium atrosepticum (strain SCRI 1043 / ATCC BAA-672) (Erwinia carotovora subsp. atroseptica).